A 327-amino-acid chain; its full sequence is Flap endonuclease 1 (327 aa).

An N-domain region spans residues 1 to 98; it reads MGVKLKDIIQ…ETIDQRRQTR (98 aa). Residues Asp-27, Asp-80, Glu-152, Glu-154, Asp-173, Asp-175, and Asp-226 each coordinate Mg(2+). Residues 116-246 are I-domain; the sequence is EARKYAMRSS…KTALKLAKKG (131 aa). The tract at residues 319-327 is interaction with PCNA; it reads SQKSLEDWF.

It belongs to the XPG/RAD2 endonuclease family. FEN1 subfamily. As to quaternary structure, interacts with PCNA. PCNA stimulates the nuclease activity without altering cleavage specificity. It depends on Mg(2+) as a cofactor.

Its function is as follows. Structure-specific nuclease with 5'-flap endonuclease and 5'-3' exonuclease activities involved in DNA replication and repair. During DNA replication, cleaves the 5'-overhanging flap structure that is generated by displacement synthesis when DNA polymerase encounters the 5'-end of a downstream Okazaki fragment. Binds the unpaired 3'-DNA end and kinks the DNA to facilitate 5' cleavage specificity. Cleaves one nucleotide into the double-stranded DNA from the junction in flap DNA, leaving a nick for ligation. Also involved in the base excision repair (BER) pathway. Acts as a genome stabilization factor that prevents flaps from equilibrating into structures that lead to duplications and deletions. Also possesses 5'-3' exonuclease activity on nicked or gapped double-stranded DNA. The protein is Flap endonuclease 1 of Methanobrevibacter smithii (strain ATCC 35061 / DSM 861 / OCM 144 / PS).